The primary structure comprises 246 residues: Small ribosomal subunit protein uS3A (246 aa).

Residues 21-92 (LNEFLTRELA…SVELYAEKVA (72 aa)) enclose the KH type-2 domain. Positions 215–246 (DEIVPTTPISEQKAAKPDQPQPPAMPQPVATA) are disordered.

Belongs to the universal ribosomal protein uS3 family.

Its subcellular location is the cytoplasm. It is found in the nucleus. The protein localises to the nucleolus. It localises to the mitochondrion inner membrane. The protein resides in the cytoskeleton. Its subcellular location is the spindle. The catalysed reaction is 2'-deoxyribonucleotide-(2'-deoxyribose 5'-phosphate)-2'-deoxyribonucleotide-DNA = a 3'-end 2'-deoxyribonucleotide-(2,3-dehydro-2,3-deoxyribose 5'-phosphate)-DNA + a 5'-end 5'-phospho-2'-deoxyribonucleoside-DNA + H(+). In terms of biological role, component of the small ribosomal subunit. The ribosome is a large ribonucleoprotein complex responsible for the synthesis of proteins in the cell. Has endonuclease activity and plays a role in repair of damaged DNA. Also involved in other processes including regulation of transcription, translation of its cognate mRNA, spindle formation and chromosome movement during mitosis, and apoptosis. The polypeptide is Small ribosomal subunit protein uS3A (rps3-a) (Xenopus laevis (African clawed frog)).